A 509-amino-acid chain; its full sequence is ATP synthase subunit alpha, mitochondrial (509 aa).

171-178 (GDRQTGKT) serves as a coordination point for ATP.

The protein belongs to the ATPase alpha/beta chains family. As to quaternary structure, F-type ATPases have 2 components, CF(1) - the catalytic core - and CF(0) - the membrane proton channel. CF(1) has five subunits: alpha(3), beta(3), gamma(1), delta(1), epsilon(1). CF(0) has three main subunits: a, b and c.

It localises to the mitochondrion. The protein resides in the mitochondrion inner membrane. Mitochondrial membrane ATP synthase (F(1)F(0) ATP synthase or Complex V) produces ATP from ADP in the presence of a proton gradient across the membrane which is generated by electron transport complexes of the respiratory chain. F-type ATPases consist of two structural domains, F(1) - containing the extramembraneous catalytic core, and F(0) - containing the membrane proton channel, linked together by a central stalk and a peripheral stalk. During catalysis, ATP synthesis in the catalytic domain of F(1) is coupled via a rotary mechanism of the central stalk subunits to proton translocation. Subunits alpha and beta form the catalytic core in F(1). Rotation of the central stalk against the surrounding alpha(3)beta(3) subunits leads to hydrolysis of ATP in three separate catalytic sites on the beta subunits. Subunit alpha does not bear the catalytic high-affinity ATP-binding sites. The polypeptide is ATP synthase subunit alpha, mitochondrial (ATPA) (Oryza sativa subsp. indica (Rice)).